The sequence spans 847 residues: MVDAVTGFVLNKIGGYLINEVLALMGVKDDLEELKTELTCIHGYLKDVEAREREDEVSKEWTKLVLDIAYDIEDVLDTYFLKLEERSLRRGLLRLTNKIGKKRDAYNIVEDIRTLKRRILDITRKRETFGIGSFNEPRGENITNVRVRQLRRAPPVDQEELVVGLEDDVKILLVKLLSDNEKDKSYIISIFGMGGLGKTALARKLYNSGDVKRRFDCRAWTYVSQEYKTRDILIRIIRSLGIVSAEEMEKIKMFEEDEELEVYLYGLLEGKNYMVVVDDVWDPDAWESLKRALPCDHRGSKVIITTRIRAIAEGVEGTVYAHKLRFLTFEESWTLFERKAFSNIEKVDEDLQRTGKEMVKKCGGLPLAIVVLSGLLSRKRTNEWHEVCASLWRRLKDNSIHISTVFDLSFKEMRHELKLCFLYFSVFPEDYEIKVEKLIHLLVAEGFIQEDEEMMMEDVARCYIDELVDRSLVKAERIERGKVMSCRIHDLLRDLAIKKAKELNFVNVYNEKQHSSDICRREVVHHLMNDYYLCDRRVNKRMRSFLFIGERRGFGYVNTTNLKLKLLRVLNMEGLLFVSKNISNTLPDVIGELIHLRYLGIADTYVSILPASISNLRFLQTLDASGNDPFQYTTDLSKLTSLRHVIGKFVGECLIGEGVNLQTLRSISSYSWSKLNHELLRNLQDLEIYDHSKWVDQRRVPLNFVSFSKPKNLRVLKLEMRNFKLSSESRTTIGLVDVNFPSLESLTLVGTTLEENSMPALQKLPRLEDLVLKDCNYSGVKIMSISAQGFGRLKNLEMSMERRGHGLDELRIEEEAMPSLIKLTVKGRLELTKLMIPDRLKAFVRRN.

Positions 24-41 form a coiled coil; that stretch reads LMGVKDDLEELKTELTCI. In terms of domain architecture, NB-ARC spans 143–453; the sequence is TNVRVRQLRR…AEGFIQEDEE (311 aa). An ATP-binding site is contributed by 192 to 199; the sequence is GMGGLGKT.

The protein belongs to the disease resistance NB-LRR family. RPP13 subfamily.

Potential disease resistance protein. This is Putative disease resistance RPP13-like protein 3 (RPP13L3) from Arabidopsis thaliana (Mouse-ear cress).